Consider the following 125-residue polypeptide: Small ribosomal subunit protein uS12 (125 aa).

The residue at position 89 (D89) is a 3-methylthioaspartic acid.

This sequence belongs to the universal ribosomal protein uS12 family. As to quaternary structure, part of the 30S ribosomal subunit. Contacts proteins S8 and S17. May interact with IF1 in the 30S initiation complex.

With S4 and S5 plays an important role in translational accuracy. Functionally, interacts with and stabilizes bases of the 16S rRNA that are involved in tRNA selection in the A site and with the mRNA backbone. Located at the interface of the 30S and 50S subunits, it traverses the body of the 30S subunit contacting proteins on the other side and probably holding the rRNA structure together. The combined cluster of proteins S8, S12 and S17 appears to hold together the shoulder and platform of the 30S subunit. In Cupriavidus metallidurans (strain ATCC 43123 / DSM 2839 / NBRC 102507 / CH34) (Ralstonia metallidurans), this protein is Small ribosomal subunit protein uS12.